Consider the following 66-residue polypeptide: Large ribosomal subunit protein bL33c (66 aa).

This sequence belongs to the bacterial ribosomal protein bL33 family.

The protein resides in the plastid. Its subcellular location is the chloroplast. The polypeptide is Large ribosomal subunit protein bL33c (Barbarea verna (Land cress)).